Consider the following 222-residue polypeptide: Hexitol phosphatase B (222 aa).

Aspartate 13 functions as the Nucleophile in the catalytic mechanism. Residues aspartate 13 and aspartate 15 each coordinate a divalent metal cation. Residues 13 to 15 (DMD), 115 to 116 (SA), and lysine 148 each bind substrate. Aspartate 15 (proton donor) is an active-site residue. Residue aspartate 173 coordinates a divalent metal cation.

This sequence belongs to the HAD-like hydrolase superfamily. CbbY/CbbZ/Gph/YieH family. Requires Mg(2+) as cofactor. It depends on Mn(2+) as a cofactor. The cofactor is Co(2+). Zn(2+) is required as a cofactor.

It catalyses the reaction sugar phosphate + H2O = sugar + phosphate.. The catalysed reaction is 2-deoxy-D-glucose 6-phosphate + H2O = 2-deoxy-D-glucose + phosphate. It carries out the reaction D-mannitol 1-phosphate + H2O = D-mannitol + phosphate. The enzyme catalyses D-sorbitol 6-phosphate + H2O = D-sorbitol + phosphate. Sugar-phosphate phosphohydrolase that catalyzes the dephosphorylation of D-mannitol 1-phosphate and D-sorbitol 6-phosphate. Also catalyzes the dephosphorylation of 2-deoxyglucose 6-phosphate (2dGlu6P); this is a biologically important activity in vivo since it contributes to the elimination of this toxic compound and plays an important role in the resistance of E.coli to 2-deoxyglucose. To a lesser extent, is also able to dephosphorylate mannose 6-phosphate (Man6P), erythrose-4-phosphate, 2-deoxyribose-5-phosphate (2dRib5P), ribose-5-phosphate (Rib5P) and glucose-6-phosphate (Glu6P) in vitro. The polypeptide is Hexitol phosphatase B (Escherichia coli (strain K12)).